The sequence spans 156 residues: Small ribosomal subunit protein uS7 (156 aa).

It belongs to the universal ribosomal protein uS7 family. In terms of assembly, part of the 30S ribosomal subunit. Contacts proteins S9 and S11.

One of the primary rRNA binding proteins, it binds directly to 16S rRNA where it nucleates assembly of the head domain of the 30S subunit. Is located at the subunit interface close to the decoding center, probably blocks exit of the E-site tRNA. In Thermodesulfovibrio yellowstonii (strain ATCC 51303 / DSM 11347 / YP87), this protein is Small ribosomal subunit protein uS7.